The sequence spans 256 residues: uncharacterized protein (256 aa).

Positions Met-1–Ser-22 are cleaved as a signal peptide. Cys-23 carries the N-palmitoyl cysteine lipid modification. A lipid anchor (S-diacylglycerol cysteine) is attached at Cys-23.

The protein belongs to the staphylococcal tandem lipoprotein family.

It localises to the cell membrane. This is an uncharacterized protein from Staphylococcus aureus (strain MRSA252).